Here is a 1141-residue protein sequence, read N- to C-terminus: MSLHSLIFFSSSSSSLLFSFFFIFIFCFSLSDAEQNPEASILYSWLHSSSPTPSSLSLFNWNSIDNTPCNNWTFITCSSQGFITDIDIESVPLQLSLPKNLPAFRSLQKLTISGANLTGTLPESLGDCLGLKVLDLSSNGLVGDIPWSLSKLRNLETLILNSNQLTGKIPPDISKCSKLKSLILFDNLLTGSIPTELGKLSGLEVIRIGGNKEISGQIPSEIGDCSNLTVLGLAETSVSGNLPSSLGKLKKLETLSIYTTMISGEIPSDLGNCSELVDLFLYENSLSGSIPREIGQLTKLEQLFLWQNSLVGGIPEEIGNCSNLKMIDLSLNLLSGSIPSSIGRLSFLEEFMISDNKFSGSIPTTISNCSSLVQLQLDKNQISGLIPSELGTLTKLTLFFAWSNQLEGSIPPGLADCTDLQALDLSRNSLTGTIPSGLFMLRNLTKLLLISNSLSGFIPQEIGNCSSLVRLRLGFNRITGEIPSGIGSLKKINFLDFSSNRLHGKVPDEIGSCSELQMIDLSNNSLEGSLPNPVSSLSGLQVLDVSANQFSGKIPASLGRLVSLNKLILSKNLFSGSIPTSLGMCSGLQLLDLGSNELSGEIPSELGDIENLEIALNLSSNRLTGKIPSKIASLNKLSILDLSHNMLEGDLAPLANIENLVSLNISYNSFSGYLPDNKLFRQLSPQDLEGNKKLCSSTQDSCFLTYRKGNGLGDDGDASRTRKLRLTLALLITLTVVLMILGAVAVIRARRNIDNERDSELGETYKWQFTPFQKLNFSVDQIIRCLVEPNVIGKGCSGVVYRADVDNGEVIAVKKLWPAMVNGGHDEKTKNVRDSFSAEVKTLGTIRHKNIVRFLGCCWNRNTRLLMYDYMPNGSLGSLLHERRGSSLDWDLRYRILLGAAQGLAYLHHDCLPPIVHRDIKANNILIGLDFEPYIADFGLAKLVDEGDIGRCSNTVAGSYGYIAPEYGYSMKITEKSDVYSYGVVVLEVLTGKQPIDPTVPEGIHLVDWVRQNRGSLEVLDSTLRSRTEAEADEMMQVLGTALLCVNSSPDERPTMKDVAAMLKEIKQEREEYAKVDLLLKKSPPPTTTMQEECRKNEMMMIPAAAASSSKEMRREERLLKSNNTSFSASSLLYSSSSSIE.

The first 33 residues, 1–33 (MSLHSLIFFSSSSSSLLFSFFFIFIFCFSLSDA), serve as a signal peptide directing secretion. At 34 to 726 (EQNPEASILY…DASRTRKLRL (693 aa)) the chain is on the extracellular side. Cysteines 69 and 77 form a disulfide. Asn71 carries an N-linked (GlcNAc...) asparagine glycan. 25 LRR repeats span residues 80-104 (QGFI…LPAF), 105-128 (RSLQ…LGDC), 130-152 (GLKV…LSKL), 153-176 (RNLE…ISKC), 178-200 (KLKS…LGKL), 202-225 (GLEV…IGDC), 226-249 (SNLT…LGKL), 250-273 (KKLE…LGNC), 275-297 (ELVD…IGQL), 298-321 (TKLE…IGNC), 322-345 (SNLK…IGRL), 347-369 (FLEE…ISNC), 370-392 (SSLV…ELGT), 394-417 (TKLT…LADC), 418-441 (TDLQ…LFML), 443-464 (NLTK…EIGN), 465-489 (CSSL…IGSL), 490-513 (KKIN…IGSC), 514-537 (SELQ…VSSL), 538-561 (SGLQ…LGRL), 563-585 (SLNK…LGMC), 586-609 (SGLQ…LGDI), 610-634 (ENLE…IASL), 636-657 (KLSI…LANI), and 658-682 (ENLV…LFRQ). Asn116 carries an N-linked (GlcNAc...) asparagine glycan. Short sequence motifs (small peptide recognition) lie at residues 185–186 (FD) and 207–210 (RIGG). N-linked (GlcNAc...) asparagine glycosylation occurs at Asn227. 2 short sequence motifs (small peptide recognition) span residues 230 to 235 (VLGLAE) and Tyr258. Asn272 carries an N-linked (GlcNAc...) asparagine glycan. Residues 280 to 282 (FLY) carry the Small peptide recognition motif. N-linked (GlcNAc...) asparagine glycosylation is present at Asn320. 2 short sequence motifs (small peptide recognition) span residues 328-331 (DLSL) and 350-352 (EFM). The N-linked (GlcNAc...) asparagine glycan is linked to Asn368. 2 short sequence motifs (small peptide recognition) span residues 398 to 402 (LFFAW) and 424 to 427 (DLSR). A glycan (N-linked (GlcNAc...) asparagine) is linked at Asn443. Positions 446-450 (KLLLI) match the Small peptide recognition motif. Asn464 carries N-linked (GlcNAc...) asparagine glycosylation. Residues 470–472 (RLR) carry the Small peptide recognition motif. Asn523 carries N-linked (GlcNAc...) asparagine glycosylation. N-linked (GlcNAc...) asparagine glycosylation occurs at Asn617. Asn664 is a glycosylation site (N-linked (GlcNAc...) asparagine). Residues 727–747 (TLALLITLTVVLMILGAVAVI) traverse the membrane as a helical segment. The Cytoplasmic portion of the chain corresponds to 748-1141 (RARRNIDNER…LLYSSSSSIE (394 aa)). Positions 786 to 1074 (LVEPNVIGKG…EIKQEREEYA (289 aa)) constitute a Protein kinase domain. ATP-binding positions include 792–800 (IGKGCSGVV) and Lys814. 2 positions are modified to phosphotyrosine: Tyr868 and Tyr906. Asp919 functions as the Proton acceptor in the catalytic mechanism. A phosphotyrosine mark is found at Tyr962 and Tyr969.

The protein belongs to the protein kinase superfamily. Ser/Thr protein kinase family. Interacts with beet curly top virus AL4/C4. Binds to RGF peptides such as RGF1, GLV5/CLEL1/RGF2, GLV7/CLEL3/RGF3, GLV3/RGF4, GLV10/CLEL7/RGF5 and RGF10/CLELN; these interactions trigger the formation of heterodimers with SERK1, SERK2 or BAK1/SERK3 via LRR regions. Interacts with UBP13. Post-translationally, phosphorylated and ubiquitinated upon interaction with RGF1, thus leading to activation a subsequent degradation. Stabilized by UBP12 and UBP13-mediated deubiquitination. Autophosphorylated. In terms of tissue distribution, expressed in roots.

Its subcellular location is the cell membrane. The enzyme catalyses L-seryl-[protein] + ATP = O-phospho-L-seryl-[protein] + ADP + H(+). The catalysed reaction is L-threonyl-[protein] + ATP = O-phospho-L-threonyl-[protein] + ADP + H(+). In terms of biological role, together with RGI2, RGI3, RGI4 and RGI5, acts as a receptor of RGF peptides (e.g. RGF1, GLV5/CLEL1/RGF2, GLV7/CLEL3/RGF3, GLV3/RGF4, GLV10/CLEL7/RGF5 and RGF10/CLELN), peptide hormones which maintain the postembryonic root stem cell niche by regulating the expression levels and patterns of the transcription factor PLETHORA (PLT, e.g. PLT1 and PLT2). Links RGF peptides signal with their downstream components. The protein is LRR receptor-like serine/threonine-protein kinase RGI1 of Arabidopsis thaliana (Mouse-ear cress).